Reading from the N-terminus, the 1077-residue chain is Adenylate cyclase type 4 (1077 aa).

Residues 1-28 are Cytoplasmic-facing; that stretch reads MARLFSPRPPPSEDLFYETYYSLSQQYP. The next 6 helical transmembrane spans lie at 29 to 50, 61 to 80, 94 to 117, 120 to 138, 141 to 162, and 170 to 190; these read LLIL…VAWA, FLTT…GLAS, GLIW…VSAW, VSFF…PLGM, AAAA…YLGW, and LLPQ…VGAY. Topologically, residues 191-582 are cytoplasmic; it reads HKALMERALR…YRLSALPAFK (392 aa). Mg(2+)-binding residues include D278, I279, and D322. Residues 278–283, 320–322, and R366 each bind ATP; these read DIVGFT and LGD. The interval 503–524 is disordered; sequence TSTPLPEKAFSPQWSLDRSRTP. At S517 the chain carries Phosphoserine. T533 is subject to Phosphothreonine. Helical transmembrane passes span 583–604, 608–630, and 661–684; these read YYAA…LVTT, ALII…CFSE, and VALG…FLPV. The Extracellular portion of the chain corresponds to 685 to 717; that stretch reads SSDCLFLASNVSSVTFNASWEMPGSLPLISIPL. N694 and N701 each carry an N-linked (GlcNAc...) asparagine glycan. The next 3 membrane-spanning stretches (helical) occupy residues 718–738, 746–766, and 793–809; these read ISIP…SLFL, LLLL…SHAW, and MGAI…LVLA. At 810–1077 the chain is on the cytoplasmic side; sequence RQNEYYCRLD…LTRTGSPSAS (268 aa). ATP is bound by residues K927, 1007–1009, 1014–1018, and K1054; these read DIW and NVASR.

It belongs to the adenylyl cyclase class-4/guanylyl cyclase family. Mg(2+) serves as cofactor. Requires Mn(2+) as cofactor.

Its subcellular location is the cell membrane. It is found in the cytoplasm. The enzyme catalyses ATP = 3',5'-cyclic AMP + diphosphate. Activated by forskolin. Insensitive to calcium/calmodulin. Stimulated by GNAS and by the G-protein beta and gamma subunit complex. Catalyzes the formation of the signaling molecule cAMP in response to G-protein signaling. The polypeptide is Adenylate cyclase type 4 (Adcy4) (Mus musculus (Mouse)).